We begin with the raw amino-acid sequence, 151 residues long: Large ribosomal subunit protein uL15 (151 aa).

Residues 1-62 (MVKLNELFPK…GGQMPLYRRV (62 aa)) are disordered. Basic residues predominate over residues 11 to 20 (HGSRKAKRRI).

Belongs to the universal ribosomal protein uL15 family. In terms of assembly, part of the 50S ribosomal subunit.

Functionally, binds to the 23S rRNA. The chain is Large ribosomal subunit protein uL15 from Elusimicrobium minutum (strain Pei191).